The following is a 357-amino-acid chain: MEKYEKIGKIGEGSYGVVFKCRNRDTGQIVAIKKFLESEDDPVIKKIALREIRMLKQLKHPNLVNLLEVFRRKRRLHLVFEYCDHTVLHELDRYQRGVPEHLVKSITWQTLQAVNFCHKHNCIHRDVKPENILITKHSVIKLCDFGFARLLTGPSDYYTDYVATRWYRSPELLVGDTQYGPPVDVWAIGCVFAELLSGVPLWPGKSDVDQLYLIRKTLGDLIPRHQQVFSTNQYFSGVKIPDPEDMEPLELKFPNISYPALGLLKGCLHMDPTQRLTCEQLLHHPYFENIREIEDLAKEHNKPTRKTLRKSRKHHCFTETSKLQYLPQLTGSSILPALDNKKYYCDTKKLNYRFPNI.

One can recognise a Protein kinase domain in the interval 4-287 (YEKIGKIGEG…CEQLLHHPYF (284 aa)). ATP contacts are provided by residues 10 to 18 (IGEGSYGVV) and lysine 33. The [NKR]KIAxRE signature appears at 45–51 (KKIALRE). The active-site Proton acceptor is the aspartate 126.

The protein belongs to the protein kinase superfamily. CMGC Ser/Thr protein kinase family. CDC2/CDKX subfamily. In terms of tissue distribution, highly expressed in kidney, and to a lower extent in ovary.

The protein localises to the cytoplasm. Its subcellular location is the nucleus. The enzyme catalyses L-seryl-[protein] + ATP = O-phospho-L-seryl-[protein] + ADP + H(+). It catalyses the reaction L-threonyl-[protein] + ATP = O-phospho-L-threonyl-[protein] + ADP + H(+). The sequence is that of Cyclin-dependent kinase-like 1 from Homo sapiens (Human).